A 295-amino-acid chain; its full sequence is Nucleotide-binding protein YjiE (295 aa).

12 to 19 (GMSGAGKT) is a binding site for ATP. Position 63–66 (63–66 (DMRS)) interacts with GTP.

The protein belongs to the RapZ-like family.

Displays ATPase and GTPase activities. The protein is Nucleotide-binding protein YjiE (yjiE) of Lactococcus lactis subsp. lactis (strain IL1403) (Streptococcus lactis).